The primary structure comprises 517 residues: General transcription factor IIF subunit 1 (517 aa).

Ala-2 carries the post-translational modification N-acetylalanine. Thr-156 bears the Phosphothreonine mark. Residues 178–466 (QQRRLKDQDQ…DAVRRYLTRK (289 aa)) are disordered. Phosphoserine is present on residues Ser-217, Ser-218, Ser-221, and Ser-224. Basic residues predominate over residues 232–251 (PKAKKKAPLAKGGRKKKKKK). Acidic residues-rich tracts occupy residues 255 to 270 (DEAF…EGQE) and 303 to 325 (EQSD…EEEE). Thr-331 carries the post-translational modification Phosphothreonine. Positions 343–355 (EESDSSEESDIDS) are enriched in acidic residues. Residues 364–374 (AKKKTPPKRER) are compositionally biased toward basic residues. Residues Ser-377, Ser-380, Ser-381, and Ser-385 each carry the phosphoserine modification. The span at 377 to 391 (SGGSSRGNSRPGTPS) shows a compositional bias: low complexity. Thr-389 carries the post-translational modification Phosphothreonine. Phosphoserine is present on Ser-391. Lys-407 bears the N6-acetyllysine mark. Over residues 428-452 (GPQSLSGKSTPQPPSGKTTPNSGDV) the composition is skewed to polar residues. Ser-431, Ser-433, and Ser-436 each carry phosphoserine. Phosphothreonine is present on residues Thr-437 and Thr-446. Phosphoserine is present on Ser-449. Glu-503, His-512, and Glu-517 together coordinate Zn(2+).

The protein belongs to the TFIIF alpha subunit family. Heterodimer of an alpha and a beta subunit. Interacts with GTF2F2, CTDP1, TAF6/TAFII80 and URI1. Interacts with GTF2B (via C-terminus and preferentially via acetylated form); this interaction prevents binding of GTF2B to GTF2F2. Part of TBP-based Pol II pre-initiation complex (PIC), in which Pol II core assembles with general transcription factors and other specific initiation factors including GTF2E1, GTF2E2, GTF2F1, GTF2F2, TCEA1, ERCC2, ERCC3, GTF2H2, GTF2H3, GTF2H4, GTF2H5, GTF2A1, GTF2A2, GTF2B and TBP; this large multi-subunit PIC complex mediates DNA unwinding and targets Pol II core to the transcription start site where the first phosphodiester bond forms. Post-translationally, phosphorylated on Ser and other residues by TAF1 and casein kinase II-like kinases.

The protein resides in the nucleus. Functionally, TFIIF is a general transcription initiation factor that binds to RNA polymerase II and helps to recruit it to the initiation complex in collaboration with TFIIB. It promotes transcription elongation. This Homo sapiens (Human) protein is General transcription factor IIF subunit 1 (GTF2F1).